Consider the following 484-residue polypeptide: Sialidase-4 (484 aa).

The FRIP motif motif lies at 22–25 (YRVP). Substrate contacts are provided by R23 and R43. Catalysis depends on proton acceptor residues D47 and D48. A BNR 1 repeat occupies 127–138 (VASRDAGLSWGS). Y177 and Y179 together coordinate substrate. One copy of the BNR 2 repeat lies at 200–211 (FYSDDHGRTWRC). Substrate contacts are provided by E222 and R242. The BNR 3 repeat unit spans residues 251 to 262 (ALSTDEGTSFLP). Residues 284–357 (PAPAPNRPRD…GPRPGVSGDV (74 aa)) are disordered. The segment covering 336–345 (RLQPRGDGPR) has biased composition (low complexity). R389 contributes to the substrate binding site. The active-site Nucleophile is the Y419. Residue E440 is part of the active site.

Belongs to the glycosyl hydrolase 33 family. In terms of processing, N-glycosylated. Predominant form in liver. Also expressed in brain, kidney and colon. In terms of tissue distribution, highly expressed in brain and at lower levels in kidney and liver.

It is found in the cell membrane. The protein resides in the endoplasmic reticulum membrane. It localises to the microsome membrane. The protein localises to the mitochondrion membrane. Its subcellular location is the cell projection. It is found in the neuron projection. The protein resides in the mitochondrion inner membrane. It localises to the mitochondrion outer membrane. The protein localises to the lysosome lumen. The catalysed reaction is Hydrolysis of alpha-(2-&gt;3)-, alpha-(2-&gt;6)-, alpha-(2-&gt;8)- glycosidic linkages of terminal sialic acid residues in oligosaccharides, glycoproteins, glycolipids, colominic acid and synthetic substrates.. The enzyme catalyses a ganglioside GM3 + H2O = a beta-D-galactosyl-(1-&gt;4)-beta-D-glucosyl-(1&lt;-&gt;1)-ceramide + N-acetylneuraminate. It catalyses the reaction a ganglioside GM3 (d18:1(4E)) + H2O = a beta-D-Gal-(1-&gt;4)-beta-D-Glc-(1&lt;-&gt;1)-Cer(d18:1(4E)) + N-acetylneuraminate. It carries out the reaction a ganglioside GM2 + H2O = a ganglioside GA2 + N-acetylneuraminate. The catalysed reaction is a ganglioside GM2 (d18:1(4E)) + H2O = a ganglioside GA2 (d18:1(4E)) + N-acetylneuraminate. The enzyme catalyses a ganglioside GD1a + H2O = a ganglioside GM1 + N-acetylneuraminate. It catalyses the reaction a ganglioside GD1a (d18:1(4E)) + H2O = a ganglioside GM1 (d18:1(4E)) + N-acetylneuraminate. It carries out the reaction a ganglioside GD3 + H2O = a ganglioside GM3 + N-acetylneuraminate. The catalysed reaction is a ganglioside GD3 (d18:1(4E)) + H2O = a ganglioside GM3 (d18:1(4E)) + N-acetylneuraminate. Exo-alpha-sialidase that catalyzes the hydrolytic cleavage of the terminal sialic acid (N-acetylneuraminic acid, Neu5Ac) of a glycan moiety in the catabolism of glycolipids, glycoproteins and oligosacharides. Efficiently hydrolyzes gangliosides including alpha-(2-&gt;3)-sialylated GD1a and GM3 and alpha-(2-&gt;8)-sialylated GD3. Hydrolyzes poly-alpha-(2-&gt;8)-sialylated neural cell adhesion molecule NCAM1 likely at growth cones, suppressing neurite outgrowth in hippocampal neurons. May desialylate sialyl Lewis A and X antigens at the cell surface, down-regulating these glycan epitopes recognized by SELE/E selectin in the initiation of cell adhesion and extravasation. Has sialidase activity toward mucin, fetuin and sialyllactose. The protein is Sialidase-4 (NEU4) of Homo sapiens (Human).